Here is a 446-residue protein sequence, read N- to C-terminus: Glutamate-1-semialdehyde 2,1-aminomutase (446 aa).

Lys263 carries the post-translational modification N6-(pyridoxal phosphate)lysine.

This sequence belongs to the class-III pyridoxal-phosphate-dependent aminotransferase family. HemL subfamily. It depends on pyridoxal 5'-phosphate as a cofactor.

Its subcellular location is the cytoplasm. It carries out the reaction (S)-4-amino-5-oxopentanoate = 5-aminolevulinate. The protein operates within porphyrin-containing compound metabolism; protoporphyrin-IX biosynthesis; 5-aminolevulinate from L-glutamyl-tRNA(Glu): step 2/2. In Haloquadratum walsbyi (strain DSM 16790 / HBSQ001), this protein is Glutamate-1-semialdehyde 2,1-aminomutase.